We begin with the raw amino-acid sequence, 188 residues long: Ribosome maturation factor RimM (188 aa).

Positions 98–174 (EGTFYYHDLR…HLTADAPAGL (77 aa)) constitute a PRC barrel domain. The segment at 169 to 188 (DAPAGLIGPEPGEEDGAAES) is disordered. The span at 179-188 (PGEEDGAAES) shows a compositional bias: acidic residues.

It belongs to the RimM family. In terms of assembly, binds ribosomal protein uS19.

It is found in the cytoplasm. Its function is as follows. An accessory protein needed during the final step in the assembly of 30S ribosomal subunit, possibly for assembly of the head region. Essential for efficient processing of 16S rRNA. May be needed both before and after RbfA during the maturation of 16S rRNA. It has affinity for free ribosomal 30S subunits but not for 70S ribosomes. The protein is Ribosome maturation factor RimM of Deinococcus radiodurans (strain ATCC 13939 / DSM 20539 / JCM 16871 / CCUG 27074 / LMG 4051 / NBRC 15346 / NCIMB 9279 / VKM B-1422 / R1).